Consider the following 611-residue polypeptide: Dolabella-3,7-dien-18-ol synthase TPS06 (611 aa).

The Mg(2+) site is built by Asp-363, Asp-367, Asp-507, Thr-511, and Glu-515. Positions 363-367 match the DDXXD motif; degenerate motif; that stretch reads DNTFD.

This sequence belongs to the terpene synthase family. Tpsa subfamily. Mg(2+) is required as a cofactor. The cofactor is Mn(2+). As to expression, predominantly expressed in flowers but also in stems, siliques, roots and leaves.

It is found in the cytoplasm. The catalysed reaction is (2E,6E,10E)-geranylgeranyl diphosphate + H2O = (3E,7E)-dolabella-3,7-dien-18-ol + diphosphate. It functions in the pathway secondary metabolite biosynthesis; terpenoid biosynthesis. Involved in terpene biosynthesis in roots. Possesses sesquiterpene (C15) synthase activity and diterpene (C20) synthase activity in vitro. Possesses dolabella-3,7-dien-18-ol synthase activity in vitro. Catalyzes the formation of dolabella-3,7-dien-18-ol from geranylgeranyl diphosphate. The polypeptide is Dolabella-3,7-dien-18-ol synthase TPS06 (Arabidopsis thaliana (Mouse-ear cress)).